Here is a 326-residue protein sequence, read N- to C-terminus: Probable cell division protein WhiA (326 aa).

Positions 275–308 (SLDELGRLADPVMTKDAIAGRIRRLLAMADKRAL) form a DNA-binding region, H-T-H motif.

The protein belongs to the WhiA family.

Functionally, involved in cell division and chromosome segregation. This chain is Probable cell division protein WhiA, found in Pseudarthrobacter chlorophenolicus (strain ATCC 700700 / DSM 12829 / CIP 107037 / JCM 12360 / KCTC 9906 / NCIMB 13794 / A6) (Arthrobacter chlorophenolicus).